The following is a 212-amino-acid chain: Urease accessory protein UreG (212 aa).

Residue 15–22 (GPVGSGKT) coordinates GTP.

Belongs to the SIMIBI class G3E GTPase family. UreG subfamily. As to quaternary structure, homodimer. UreD, UreF and UreG form a complex that acts as a GTP-hydrolysis-dependent molecular chaperone, activating the urease apoprotein by helping to assemble the nickel containing metallocenter of UreC. The UreE protein probably delivers the nickel.

It is found in the cytoplasm. Functionally, facilitates the functional incorporation of the urease nickel metallocenter. This process requires GTP hydrolysis, probably effectuated by UreG. This Opitutus terrae (strain DSM 11246 / JCM 15787 / PB90-1) protein is Urease accessory protein UreG.